We begin with the raw amino-acid sequence, 525 residues long: Heat shock factor protein 1 (525 aa).

Met-1 carries the N-acetylmethionine modification. The tract at residues 15-120 (VPAFLTKLWT…LLENIKRKVT (106 aa)) is DNA-binding domain. Lys-80 is subject to N6-acetyllysine. The residue at position 91 (Lys-91) is an N6-acetyllysine; alternate. Lys-91 is covalently cross-linked (Glycyl lysine isopeptide (Lys-Gly) (interchain with G-Cter in SUMO2); alternate). The residue at position 118 (Lys-118) is an N6-acetyllysine. The residue at position 121 (Ser-121) is a Phosphoserine; by MAPKAPK2. Glycyl lysine isopeptide (Lys-Gly) (interchain with G-Cter in SUMO2) cross-links involve residues Lys-126 and Lys-131. Residues 130–203 (IKIRQDSVTR…ISLVQSNRIL (74 aa)) are hydrophobic repeat HR-A/B. Thr-142 carries the phosphothreonine; by CK2 modification. N6-acetyllysine is present on residues Lys-150 and Lys-188. Residues 203-224 (LGVKRKIPLMLSDSNSAHSVPK) form a d domain region. The residue at position 208 (Lys-208) is an N6-acetyllysine; alternate. Residue Lys-208 forms a Glycyl lysine isopeptide (Lys-Gly) (interchain with G-Cter in SUMO2); alternate linkage. Ser-216 is subject to Phosphoserine; by PLK1. Residues 221 to 310 (SVPKYGRQYS…PPSPPHSPRV (90 aa)) form a regulatory domain region. Residue Lys-224 forms a Glycyl lysine isopeptide (Lys-Gly) (interchain with G-Cter in SUMO2) linkage. Ser-230 is modified (phosphoserine; by CAMK2A). Disordered regions lie at residues 272-327 (APTS…PLSP) and 340-365 (PTPAASNTAPMDTTGAQAPALPTPST). Phosphoserine occurs at positions 275 and 292. N6-acetyllysine; alternate is present on Lys-298. Lys-298 participates in a covalent cross-link: Glycyl lysine isopeptide (Lys-Gly) (interchain with G-Cter in SUMO2); alternate. Lys-298 is covalently cross-linked (Glycyl lysine isopeptide (Lys-Gly) (interchain with G-Cter in SUMO); alternate). A phosphoserine mark is found at Ser-303, Ser-307, Ser-314, and Ser-319. Ser-320 is modified (phosphoserine; by PKA). Phosphothreonine is present on Thr-323. Ser-326 is subject to Phosphoserine; by MAPK12. Polar residues predominate over residues 343–355 (AASNTAPMDTTGA). The residue at position 345 (Ser-345) is a Phosphoserine. Positions 367–525 (EKCLSVACLD…PHKAKDPTVS (159 aa)) are transactivation domain. The segment at 380–405 (LSDHLDAMDSNLDNLQTMLTSHGFSV) is hydrophobic repeat HR-C. Residues 408-416 (SALLDLFSP) carry the 9aaTAD motif. Ser-415 is subject to Phosphoserine; by PLK1. Ser-440 is subject to Phosphoserine. Disordered stretches follow at residues 441 to 460 (PQEPPRPIEAENSNPDSGKQ) and 495 to 525 (YFSEGDDYTDDPTISLLTGTEPHKAKDPTVS). The span at 515 to 525 (EPHKAKDPTVS) shows a compositional bias: basic and acidic residues. Lys-520 carries the post-translational modification N6-acetyllysine.

This sequence belongs to the HSF family. As to quaternary structure, monomer; cytoplasmic latent and transcriptionally inactive monomeric form in unstressed cells. Homotrimer; in response to stress, such as heat shock, homotrimerizes and translocates into the nucleus, binds to heat shock element (HSE) sequences in promoter of heat shock protein (HSP) genes and acquires transcriptional ability. Interacts (via monomeric form) with FKBP4; this interaction occurs in unstressed cells. Associates (via monomeric form) with HSP90 proteins in a multichaperone complex in unnstressed cell; this association maintains HSF1 in a non-DNA-binding and transcriptional inactive form by preventing HSF1 homotrimerization. Homotrimeric transactivation activity is modulated by protein-protein interactions and post-translational modifications. Interacts with HSP90AA1; this interaction is decreased in a IER5-dependent manner, promoting HSF1 accumulation in the nucleus, homotrimerization and DNA-binding activities. Part (via regulatory domain in the homotrimeric form) of a large heat shock-induced HSP90-dependent multichaperone complex at least composed of FKBP4, FKBP5, HSP90 proteins, PPID, PPP5C and PTGES3; this association maintains the HSF1 homotrimeric DNA-bound form in a transcriptionally inactive form. Interacts with BAG3 (via BAG domain); this interaction occurs in normal and heat-shocked cells promoting nuclear shuttling of HSF1 in a BAG3-dependent manner. Interacts (via homotrimeric and hyperphosphorylated form) with FKBP4; this interaction occurs upon heat shock in a HSP90-dependent multichaperone complex. Interacts (via homotrimeric form preferentially) with EEF1A proteins. In heat shocked cells, stress-denatured proteins compete with HSF1 homotrimeric DNA-bound form for association of the HSP90-dependent multichaperone complex, and hence alleviating repression of HSF1-mediated transcriptional activity. Interacts (via homotrimeric form preferentially) with DAXX; this interaction relieves homotrimeric HSF1 from repression of its transcriptional activity by HSP90-dependent multichaperone complex upon heat shock. Interacts (via D domain and preferentially with hyperphosphorylated form) with JNK1; this interaction occurs under both normal growth conditions and immediately upon heat shock. Interacts (via D domain and preferentially with hyperphosphorylated form) with MAPK3; this interaction occurs upon heat shock. Interacts with IER5 (via central region); this interaction promotes PPP2CA-induced dephosphorylation on Ser-121, Ser-307, Ser-314 and Thr-323 and HSF1 transactivation activity. Found in a ribonucleoprotein complex composed of the HSF1 homotrimeric form, translation elongation factor eEF1A proteins and non-coding RNA heat shock RNA-1 (HSR1); this complex occurs upon heat shock and stimulates HSF1 DNA-binding activity. Interacts (via transactivation domain) with HSPA1A/HSP70 and DNAJB1; these interactions result in the inhibition of heat shock- and HSF1-induced transcriptional activity during the attenuation and recovery phase from heat shock. Interacts (via Ser-303 and Ser-307 phosphorylated form) with YWHAE; this interaction promotes HSF1 sequestration in the cytoplasm in an ERK-dependent manner. Found in a complex with IER5 and PPP2CA. Interacts with TPR; this interaction increases upon heat shock and stimulates export of HSP70 mRNA. Interacts with SYMPK (via N-terminus) and CSTF2; these interactions occur upon heat shock. Interacts (via transactivation domain) with HSPA8. Interacts with EEF1D; this interaction occurs at heat shock promoter element (HSE) sequences. Interacts with MAPKAPK2. Interacts with PRKACA/PKA. Interacts (via transactivation domain) with GTF2A2. Interacts (via transactivation domain) with GTF2B. Interacts (via transactivation domain) with TBP. Interacts with CDK9, CCNT1 and EP300. Interacts (via N-terminus) with XRCC5 (via N-terminus) and XRCC6 (via N-terminus); these interactions are direct and prevent XRCC5/XRCC6 heterodimeric binding and non-homologous end joining (NHEJ) repair activities induced by ionizing radiation (IR). Interacts with PLK1; this interaction occurs during the early mitotic period, increases upon heat shock but does not modulate neither HSF1 homotrimerization and DNA-binding activities. Interacts (via Ser-216 phosphorylated form) with CDC20; this interaction occurs in mitosis in a MAD2L1-dependent manner and prevents PLK1-stimulated degradation of HSF1 by blocking the recruitment of the SCF(BTRC) ubiquitin ligase complex. Interacts with MAD2L1; this interaction occurs in mitosis. Interacts with BTRC; this interaction occurs during mitosis, induces its ubiquitin-dependent degradation following stimulus-dependent phosphorylation at Ser-216, a process inhibited by CDC20. Interacts with HSP90AA1 and HSP90AB1. Forms a complex with TTC5/STRAP and p300/EP300; these interactions augment chromatin-bound HSF1 and p300/EP300 histone acetyltransferase activity. Post-translationally, phosphorylated. Phosphorylated in unstressed cells; this phosphorylation is constitutive and implicated in the repression of HSF1 transcriptional activity. Phosphorylated on Ser-121 by MAPKAPK2; this phosphorylation promotes interaction with HSP90 proteins and inhibits HSF1 homotrimerization, DNA-binding and transactivation activities. Phosphorylation on Ser-303 by GSK3B/GSK3-beat and on Ser-307 by MAPK3 within the regulatory domain is involved in the repression of HSF1 transcriptional activity and occurs in a RAF1-dependent manner. Phosphorylation on Ser-303 and Ser-307 increases HSF1 nuclear export in a YWHAE- and XPO1/CRM1-dependent manner. Phosphorylation on Ser-307 is a prerequisite for phosphorylation on Ser-303. According to, Ser-303 is not phosphorylated in unstressed cells. Phosphorylated on Ser-415 by PLK1; phosphorylation promotes nuclear translocation upon heat shock. Hyperphosphorylated upon heat shock and during the attenuation and recovery phase period of the heat shock response. Phosphorylated on Thr-142; this phosphorylation increases HSF1 transactivation activity upon heat shock. Phosphorylation on Ser-230 by CAMK2A; this phosphorylation enhances HSF1 transactivation activity upon heat shock. Phosphorylation on Ser-326 by MAPK12; this phosphorylation enhances HSF1 nuclear translocation, homotrimerization and transactivation activities upon heat shock. Phosphorylated on Ser-320 by PRKACA/PKA; this phosphorylation promotes nuclear localization and transcriptional activity upon heat shock. Phosphorylated by MAPK8; this phosphorylation occurs upon heat shock, induces HSF1 translocation into nuclear stress bodies and negatively regulates transactivation activity. Neither basal nor stress-inducible phosphorylation on Ser-230, Ser-292, Ser-303, Ser-307, Ser-314, Ser-319, Ser-320, Thr-323, Ser-326, Ser-338, Ser-345, Ser-364 and Thr-365 within the regulatory domain is involved in the regulation of HSF1 subcellular localization or DNA-binding activity; however, it negatively regulates HSF1 transactivation activity. Phosphorylated on Ser-216 by PLK1 in the early mitotic period; this phosphorylation regulates HSF1 localization to the spindle pole, the recruitment of the SCF(BTRC) ubiquitin ligase complex inducing HSF1 degradation, and hence mitotic progression. Dephosphorylated on Ser-121, Ser-307, Ser-314 and Thr-323 by phosphatase PPP2CA in an IER5-dependent manner, leading to HSF1-mediated transactivation activity. Sumoylated with SUMO1 and SUMO2 upon heat shock in a ERK2-dependent manner. Sumoylated by SUMO1 on Lys-298; sumoylation occurs upon heat shock and promotes its localization to nuclear stress bodies and DNA-binding activity. Phosphorylation on Ser-303 and Ser-307 is probably a prerequisite for sumoylation. In terms of processing, acetylated on Lys-118; this acetylation is decreased in a IER5-dependent manner. Acetylated on Lys-118, Lys-208 and Lys-298; these acetylations occur in a EP300-dependent manner. Acetylated on Lys-80; this acetylation inhibits DNA-binding activity upon heat shock. Deacetylated on Lys-80 by SIRT1; this deacetylation increases DNA-binding activity. Post-translationally, ubiquitinated by SCF(BTRC) and degraded following stimulus-dependent phosphorylation at Ser-216 by PLK1 in mitosis. Polyubiquitinated. Undergoes proteasomal degradation upon heat shock and during the attenuation and recovery phase period of the heat shock response.

The protein localises to the nucleus. It localises to the cytoplasm. It is found in the nucleoplasm. Its subcellular location is the perinuclear region. The protein resides in the cytoskeleton. The protein localises to the spindle pole. It localises to the microtubule organizing center. It is found in the centrosome. Its subcellular location is the chromosome. The protein resides in the centromere. The protein localises to the kinetochore. In terms of biological role, functions as a stress-inducible and DNA-binding transcription factor that plays a central role in the transcriptional activation of the heat shock response (HSR), leading to the expression of a large class of molecular chaperones, heat shock proteins (HSPs), that protect cells from cellular insult damage. In unstressed cells, is present in a HSP90-containing multichaperone complex that maintains it in a non-DNA-binding inactivated monomeric form. Upon exposure to heat and other stress stimuli, undergoes homotrimerization and activates HSP gene transcription through binding to site-specific heat shock elements (HSEs) present in the promoter regions of HSP genes. Upon heat shock stress, forms a chromatin-associated complex with TTC5/STRAP and p300/EP300 to stimulate HSR transcription, therefore increasing cell survival. Activation is reversible, and during the attenuation and recovery phase period of the HSR, returns to its unactivated form. Binds to inverted 5'-NGAAN-3' pentamer DNA sequences. Binds to chromatin at heat shock gene promoters. Activates transcription of transcription factor FOXR1 which in turn activates transcription of the heat shock chaperones HSPA1A and HSPA6 and the antioxidant NADPH-dependent reductase DHRS2. Binds the promoter region upstream of exon 1 of Mpv17l to activate expression of the M-LPS isoform which is involved in metabolism of reactive oxygen species. Also serves several other functions independently of its transcriptional activity. Involved in the repression of Ras-induced transcriptional activation of the c-fos gene in heat-stressed cells. Positively regulates pre-mRNA 3'-end processing and polyadenylation of HSP70 mRNA upon heat-stressed cells in a symplekin (SYMPK)-dependent manner. Plays a role in nuclear export of stress-induced HSP70 mRNA. Plays a role in the regulation of mitotic progression. Also plays a role as a negative regulator of non-homologous end joining (NHEJ) repair activity in a DNA damage-dependent manner. Involved in stress-induced cancer cell proliferation in a IER5-dependent manner. This is Heat shock factor protein 1 from Mus musculus (Mouse).